The sequence spans 93 residues: Small ribosomal subunit protein uS19 (93 aa).

Belongs to the universal ribosomal protein uS19 family.

Protein S19 forms a complex with S13 that binds strongly to the 16S ribosomal RNA. The protein is Small ribosomal subunit protein uS19 of Pseudarthrobacter chlorophenolicus (strain ATCC 700700 / DSM 12829 / CIP 107037 / JCM 12360 / KCTC 9906 / NCIMB 13794 / A6) (Arthrobacter chlorophenolicus).